An 81-amino-acid polypeptide reads, in one-letter code: Putative defensin-like protein 265 (81 aa).

The N-terminal stretch at 1–26 (MEKTVSRKVVVLAILLSLSCLCIAKA) is a signal peptide. 3 cysteine pairs are disulfide-bonded: Cys48–Cys66, Cys54–Cys71, and Cys58–Cys73.

It belongs to the DEFL family.

It localises to the secreted. This Arabidopsis thaliana (Mouse-ear cress) protein is Putative defensin-like protein 265.